Consider the following 298-residue polypeptide: MRILPLSSDSMGARSMATFVETKDLRIMIDPGVALGPSRYGLPPHPKEWERMEAHWREIVRQAHKADLLIVTHYHYDHHNPWEGLEIYEGKRVLVKDPKRNINQSQRGRASFFLKQIEGIANVEIADGRSFREGDTIIEFSEPVFHGTNSKLGYVIEVFIREGEDSFLFTSDVEGPSLDDQARFVLEKKPKVVMVDGPMTYMLGYRYSRASLDASIRNLSSILDAVETLVIDHHLLRDLEWSKRIESVLNKGREVKKKVITSNELVDKPLEMLEAKRKELYELYPVDESEMREWKFED.

This sequence belongs to the UPF0282 family.

The chain is UPF0282 protein Kcr_0286 from Korarchaeum cryptofilum (strain OPF8).